The sequence spans 166 residues: Putative peptidyl-prolyl cis-trans isomerase dodo (166 aa).

The WW domain occupies 5 to 39 (EQLPDGWEKRTSRSTGMSYYLNMYTKESQWDQPTE). Residues 32-53 (SQWDQPTEPAKKAGGGSAGGGD) form a disordered region. Residues 44 to 53 (AGGGSAGGGD) show a composition bias toward gly residues. The PpiC domain maps to 55 to 166 (PDEVHCLHLL…SGLHIILRKA (112 aa)).

The catalysed reaction is [protein]-peptidylproline (omega=180) = [protein]-peptidylproline (omega=0). This chain is Putative peptidyl-prolyl cis-trans isomerase dodo (dod), found in Drosophila melanogaster (Fruit fly).